Here is a 423-residue protein sequence, read N- to C-terminus: Haloacid dehalogenase-like hydrolase domain-containing 5 (423 aa).

An N-terminal signal peptide occupies residues 1 to 23 (MAAWGCVAALGAARGLCWRAARA).

This sequence belongs to the HAD-like hydrolase superfamily. In terms of tissue distribution, widely expressed.

In Homo sapiens (Human), this protein is Haloacid dehalogenase-like hydrolase domain-containing 5.